A 478-amino-acid chain; its full sequence is Cell division protein FtsZ homolog 2-1, chloroplastic (478 aa).

The segment at glutamate 86–alanine 112 is disordered. Glycine 128–asparagine 132 is a GTP binding site. A Phosphoserine; by PGK1 modification is found at serine 143. Residues glycine 217–glycine 219, glutamate 248, and arginine 252 contribute to the GTP site. The residue at position 286 (threonine 286) is a Phosphothreonine; by PGK1. Residue aspartate 296 coordinates GTP.

Belongs to the FtsZ family. Aggregates to form a contractile ring-like structure; contraction of the ring was accompanied by an increase in the filament turnover rate. Self-interacts and binds to FTSZ1 in heteromers to form two morphologically distinct types of filaments, termed type-I (smooth filaments) and -II (rough filaments), in a GTP-dependent manner; the GDP-induced disassembly is inhibited by ARC6. Interacts (via C-terminus) with ARC6; this interaction enables ARC3 binding to FTSZ2. Part of a complex made of ARC3, ARC6, FTSZ1 and FTSZ2. Binds to MCD1 in an ARC6-dependent manner. Binds to CDP1/PARC6. Part of a complex made of CDP1/PARC6, ARC3 and FtsZ proteins in the middle of the plastid; this complex enhances the dynamics of Z rings during chloroplast division. Binds to PGK1. Post-translationally, filaments containing FTSZ2-1 are stabilized when in complex with GTP but destabilized after conversion of GTP into GDP; ARC6 conteracts this destabilisation by preventing the dissociation of GDP-bound FTSZ2 molecules thus inhibiting filament disassembly whereas ARC3 promotes GTPase activity thus accelerating the conversion of GTP into GDP and triggering FtsZ2 filaments disassembly. Phosphorylation at Ser-143 is necessary for interactions with ARC3, ARC6, FTSZ1 and FTSZ2-2. Phosphorylations at Ser-143 and Thr-286 are required for the formation of contractile ring at the chloroplast midpoint.

It localises to the plastid. The protein resides in the chloroplast stroma. It is found in the chloroplast thylakoid membrane. GTPase activity is enhanced by ARC3. Functionally, exhibits GTPase activity which converts GTP ligands to GDP. Component of the plastid division machinery consisting in a binary fission accomplished by the simultaneous constriction of the FtsZ ring on the stromal side of the inner envelope membrane, and the ARC5 ring on the cytosolic side of the outer envelope membrane. Required for plastid division in a dose-dependent manner. In the vegetative shoot apex, at the shoot apical meristem (SAM), where the proplastid-to-chloroplast transition takes place, major contributor of plastid division in the L1 and L3 layers and contributes equally with FTSZ1 in the L2 layer. This is Cell division protein FtsZ homolog 2-1, chloroplastic from Arabidopsis thaliana (Mouse-ear cress).